The primary structure comprises 145 residues: Large ribosomal subunit protein bL9 (145 aa).

Belongs to the bacterial ribosomal protein bL9 family.

In terms of biological role, binds to the 23S rRNA. The polypeptide is Large ribosomal subunit protein bL9 (Mesomycoplasma hyopneumoniae (strain 7448) (Mycoplasma hyopneumoniae)).